We begin with the raw amino-acid sequence, 230 residues long: Urease accessory protein UreF (230 aa).

The protein belongs to the UreF family. In terms of assembly, ureD, UreF and UreG form a complex that acts as a GTP-hydrolysis-dependent molecular chaperone, activating the urease apoprotein by helping to assemble the nickel containing metallocenter of UreC. The UreE protein probably delivers the nickel.

It localises to the cytoplasm. Functionally, required for maturation of urease via the functional incorporation of the urease nickel metallocenter. The protein is Urease accessory protein UreF of Cupriavidus taiwanensis (strain DSM 17343 / BCRC 17206 / CCUG 44338 / CIP 107171 / LMG 19424 / R1) (Ralstonia taiwanensis (strain LMG 19424)).